We begin with the raw amino-acid sequence, 619 residues long: DEAD-box ATP-dependent RNA helicase 35B (619 aa).

Composition is skewed to low complexity over residues 1–10 and 49–58; these read MAAAAAAAAA and PPTTNAVAVA. The segment at 1–72 is disordered; sequence MAAAAAAAAA…PPRSTSSPAV (72 aa). The short motif at 173–201 is the Q motif element; that stretch reads RSFGDLRLPEPILRALRGKGIEKPTPIQV. Positions 204 to 388 constitute a Helicase ATP-binding domain; it reads LPVALSGRDM…KSALVKPIIV (185 aa). 217–224 is an ATP binding site; that stretch reads AFTGSGKT. The short motif at 336–339 is the DEAD box element; that stretch reads DEAD. One can recognise a Helicase C-terminal domain in the interval 399–559; the sequence is DVIQEVEYVK…RLPPILADLD (161 aa). The CCHC-type zinc finger occupies 576–593; the sequence is KGCAFCGGLGHRIEACPK.

This sequence belongs to the DEAD box helicase family. DDX41 subfamily.

The enzyme catalyses ATP + H2O = ADP + phosphate + H(+). The polypeptide is DEAD-box ATP-dependent RNA helicase 35B (Oryza sativa subsp. japonica (Rice)).